The following is a 914-amino-acid chain: DNA mismatch repair protein MutS (914 aa).

Residues 28-74 (NTNSVKDSNLNDEELSKNAELRPRKRKKSVLLQNSVGEQTEDFSNDE) form a disordered region. 726-733 (GPNASGKS) is a binding site for ATP.

Belongs to the DNA mismatch repair MutS family.

Functionally, this protein is involved in the repair of mismatches in DNA. It is possible that it carries out the mismatch recognition step. This protein has a weak ATPase activity. This is DNA mismatch repair protein MutS from Prochlorococcus marinus (strain SARG / CCMP1375 / SS120).